The sequence spans 600 residues: LLFLFSSAYSRGVFRRDTHKSEVAHRFKDLGEEHFKGLVLVAFSQYLQQCPFEEHVKLVNEVTEFAKTCVADESAENCDKSLHTLFGDKLCTVATLRETYGEMADCCAKQEPERNECFLQHKDDNPNLPPLVRPEVDVMCTAFHDNEATFLKKYLYEVARRHPYFYAPELLFFAARYKAAFAECCQAADKAACLLPKLDELRDEGKASSAKQRLKCASLQKFGDRAFKAWAVARLSQKFPKAEFAEVSKLVTDLTKVHTECCHGDLLECADDRADLAKYMCENQDSISSKLKECCDKPLLEKSHCLAEVENDEMPADLPSLAADYVESKDVCKNYAEAKDVFLGMFLYEYARRHPDYSVMLLLRLAKAYEATLEKCCAAADPHECYAKVFDEFQPLVEEPQNLVKQNCELFEQLGEYKFQNALLVRYTKKVPQVSTPTLVEVSRNLGKVGAKCCKLPEAKRMPCAEDYLSVVLNRLCVLHEKTPVSEKVTKCCTESLVNRRPCFSALELDEAYVPKAFNAETFTFHADMCTLSEKEKQVKKQTALVELVKHKPKATKEQLKGVMDNFAAFVEKCCKADDKEACFAEEGPKFVAASQAALA.

A signal peptide spans 1–10 (LLFLFSSAYS). Positions 11 to 16 (RGVFRR) are excised as a propeptide. Albumin domains are found at residues 11-202 (RGVF…DELR), 203-395 (DEGK…EFQP), and 396-593 (LVEE…KFVA). H19 is a binding site for Cu cation. S21 is modified (phosphoserine). Ca(2+) contacts are provided by E22 and D29. A disulfide bond links C69 and C78. A phosphoserine mark is found at S74 and S81. Zn(2+) is bound at residue H83. Disulfide bonds link C91-C107, C106-C117, C140-C185, C184-C193, C216-C262, and C261-C269. The residue at position 99 (T99) is a Phosphothreonine. K221 carries the N6-succinyllysine modification. Position 256 (K256) interacts with (4Z,15Z)-bilirubin IXalpha. E260 lines the Ca(2+) pocket. Zn(2+) is bound by residues H263 and D265. Positions 265, 268, 271, and 275 each coordinate Ca(2+). 8 disulfide bridges follow: C281–C295, C294–C305, C332–C377, C376–C385, C408–C454, C453–C464, C477–C493, and C492–C503. S289 bears the Phosphoserine mark. At S435 the chain carries Phosphoserine. Phosphothreonine is present on residues T436 and T438. Position 452 is an N6-succinyllysine (K452). Phosphoserine is present on S505. 2 cysteine pairs are disulfide-bonded: C530/C575 and C574/C583. K535 bears the N6-succinyllysine mark. K550 is subject to N6-methyllysine. K580 carries the N6-succinyllysine modification.

Belongs to the ALB/AFP/VDB family. In terms of assembly, interacts with FCGRT; this interaction regulates ALB homeostasis. Interacts with TASOR. In plasma, occurs in a covalently-linked complex with chromophore-bound alpha-1-microglobulin; this interaction does not prevent fatty acid binding to ALB. In terms of processing, phosphorylated by FAM20C in the extracellular medium. Plasma.

The protein localises to the secreted. Binds water, Ca(2+), Na(+), K(+), fatty acids, hormones, bilirubin and drugs. Its main function is the regulation of the colloidal osmotic pressure of blood. Major zinc transporter in plasma, typically binds about 80% of all plasma zinc. Major calcium and magnesium transporter in plasma, binds approximately 45% of circulating calcium and magnesium in plasma. Potentially has more than two calcium-binding sites and might additionally bind calcium in a non-specific manner. The shared binding site between zinc and calcium at residue Asp-265 suggests a crosstalk between zinc and calcium transport in the blood. The rank order of affinity is zinc &gt; calcium &gt; magnesium. Binds to the bacterial siderophore enterobactin and inhibits enterobactin-mediated iron uptake of E.coli from ferric transferrin, and may thereby limit the utilization of iron and growth of enteric bacteria such as E.coli. Does not prevent iron uptake by the bacterial siderophore aerobactin. This is Albumin (ALB) from Macaca mulatta (Rhesus macaque).